The sequence spans 549 residues: Cation/acetate symporter ActP (549 aa).

A run of 13 helical transmembrane segments spans residues 33 to 53, 77 to 97, 103 to 123, 148 to 168, 183 to 203, 206 to 226, 262 to 282, 303 to 323, 355 to 375, 404 to 424, 428 to 448, 464 to 484, and 493 to 513; these read WQAI…TYWA, LAIA…ALVF, GLIY…LIAE, ILSA…QMVG, IAVV…GMLA, WVQI…AFMV, ISAL…PHIL, GFMG…IMLV, LFLG…VAGL, VSKI…VLFE, IAFM…PIIL, GGWL…TIWV, and IFPY…GIWF.

It belongs to the sodium:solute symporter (SSF) (TC 2.A.21) family.

The protein resides in the cell inner membrane. Functionally, transports acetate. This chain is Cation/acetate symporter ActP, found in Salmonella arizonae (strain ATCC BAA-731 / CDC346-86 / RSK2980).